The sequence spans 120 residues: uncharacterized protein (120 aa).

This is an uncharacterized protein from Mycobacterium tuberculosis (strain CDC 1551 / Oshkosh).